Consider the following 459-residue polypeptide: MVQKRTAELQGFHRSFKGQNPFELAFSLDLAQHRDSDFSPQCEARPDMPSSQPIDIPDAKKRGRKKKRCRATDSFSGRFEDVYQLQEDVLGEGAHARVQTCVNLITNQEYAVKIIEKQLGHIRSRVFREVEMLYQCQGHRNVLELIEFFEEEDRFYLVFEKMRGGSILSHIHRRRHFNELEASVVVQDVASALDFLHNKGIAHRDLKPENILCEHPNQVSPVKICDFDLGSGIKLNGDCSPISTPELLTPCGSAEYMAPEVVEAFSEEASIYDKRCDLWSLGVILYILLSGYPPFVGHCGSDCGWDRGEACPACQNMLFESIQEGKYEFPDKDWSHISFAAKDLISKLLVRDAKQRLSAAQVLQHPWVQGCAPENTLPTPLVLQRNSCAKDLTSFAAEAIAMNRQLAQCEEDAGQDQPVVIRATSRCLQLSPPSQSKLAQRRQRASLSATPVVLVGDRA.

A disordered region spans residues 37–67; sequence DFSPQCEARPDMPSSQPIDIPDAKKRGRKKK. The Nuclear localization signal motif lies at 60–66; it reads KKRGRKK. Ser74 is modified (phosphoserine). One can recognise a Protein kinase domain in the interval 84 to 368; sequence QLQEDVLGEG…AAQVLQHPWV (285 aa). Residues 90-98 and Lys113 each bind ATP; that span reads LGEGAHARV. 160–162 contacts staurosporine; sequence EKM. Asp205 (proton acceptor) is an active-site residue. A staurosporine-binding site is contributed by Glu209. A phosphothreonine mark is found at Thr244 and Thr249. Zn(2+) is bound by residues Cys299, Cys311, and Cys314. Thr379 bears the Phosphothreonine mark. A phosphoserine mark is found at Ser431 and Ser434. Residues 438–442 carry the MAP kinase binding motif; that stretch reads LAQRR. Ser446 bears the Phosphoserine mark. Thr450 carries the phosphothreonine modification.

This sequence belongs to the protein kinase superfamily. CAMK Ser/Thr protein kinase family. Interacts with ESR2 and EIF4E in the nucleus. Monomer. Interacts with the C-terminal regions of EIF4G1 and EIF4G2; this interaction is promoted when MAPK pathways are repressed but repressed upon ERK proteins activation. Also binds to dephosphorylated MAPK3/ERK1 and MAPK1/ERK2. Interaction with phosphorylated MAPK3/ERK1 and MAPK1/ERK2 protects it from dephosphorylation and inactivation. Mg(2+) is required as a cofactor. The cofactor is Zn(2+). Dual phosphorylation of Thr-244 and Thr-249 activates the kinase. Phosphorylation of Thr-379 activates the kinase. Phosphorylated upon arsenic trioxide As(2)O(3) treatment. Phosphorylated by MAPK1/ERK2, MAPK11 and MAPK14. Dephosphorylated by PP2A. As to expression, ubiquitously expressed in all tissues examined, with high levels in skeletal muscle and low levels in brain.

The protein localises to the cytoplasm. The protein resides in the nucleus. It is found in the PML body. It catalyses the reaction L-seryl-[protein] + ATP = O-phospho-L-seryl-[protein] + ADP + H(+). It carries out the reaction L-threonyl-[protein] + ATP = O-phospho-L-threonyl-[protein] + ADP + H(+). Inhibited by CGP57380 and staurosporine. Its function is as follows. Serine/threonine-protein kinase that phosphorylates SFPQ/PSF, HNRNPA1 and EIF4E. May play a role in the response to environmental stress and cytokines. Appears to regulate translation by phosphorylating EIF4E, thus increasing the affinity of this protein for the 7-methylguanosine-containing mRNA cap. Required for mediating PP2A-inhibition-induced EIF4E phosphorylation. Triggers EIF4E shuttling from cytoplasm to nucleus. Enhances the formation of EIF4F complex in pachytene spermatocytes, thus promoting mRNA translation during spermatogenesis. Displays a high basal kinase activity. Acts as a mediator of the suppressive effects of IFNgamma on hematopoiesis. Negative regulator for signals that control generation of arsenic trioxide As(2)O(3)-dependent apoptosis and anti-leukemic responses. Involved in anti-apoptotic signaling in response to serum withdrawal. In Mus musculus (Mouse), this protein is MAP kinase-interacting serine/threonine-protein kinase 2 (Mknk2).